The following is a 431-amino-acid chain: Mitochondrial inner membrane protein OXA1-like (431 aa).

A mitochondrion-targeting transit peptide spans 1 to 22 (MATCLRGITKRVNLLQRRVYPS). 5 helical membrane passes run 119–139 (VVPA…PVAA), 155–175 (WWAS…PILL), 227–247 (FTPL…FFAI), 269–289 (TTTD…LIMV), and 312–332 (IIAF…FCYW). The tract at residues 362 to 414 (NSSTRQPSPSSPLPFSFAEPKDQSVVAQEKPPMSSESSSSVPDRRISRSSVLN) is disordered. A compositionally biased stretch (low complexity) spans 392–402 (PPMSSESSSSV).

It belongs to the OXA1/ALB3/YidC (TC 2.A.9.2) family.

The protein localises to the mitochondrion inner membrane. Functionally, probably required for the insertion of integral membrane proteins into the mitochondrial inner membrane. May participate in the activity and assembly of cytochrome oxidase. The polypeptide is Mitochondrial inner membrane protein OXA1-like (OXA1L) (Arabidopsis thaliana (Mouse-ear cress)).